Here is a 162-residue protein sequence, read N- to C-terminus: 2-C-methyl-D-erythritol 2,4-cyclodiphosphate synthase (162 aa).

Positions 12 and 14 each coordinate a divalent metal cation. Residues 12–14 (DVH) and 38–39 (HS) contribute to the 4-CDP-2-C-methyl-D-erythritol 2-phosphate site. His-46 provides a ligand contact to a divalent metal cation. 4-CDP-2-C-methyl-D-erythritol 2-phosphate contacts are provided by residues 60–62 (DIG), 65–69 (FPDTD), Phe-143, and Arg-146.

This sequence belongs to the IspF family. Homotrimer. It depends on a divalent metal cation as a cofactor.

The enzyme catalyses 4-CDP-2-C-methyl-D-erythritol 2-phosphate = 2-C-methyl-D-erythritol 2,4-cyclic diphosphate + CMP. It functions in the pathway isoprenoid biosynthesis; isopentenyl diphosphate biosynthesis via DXP pathway; isopentenyl diphosphate from 1-deoxy-D-xylulose 5-phosphate: step 4/6. Involved in the biosynthesis of isopentenyl diphosphate (IPP) and dimethylallyl diphosphate (DMAPP), two major building blocks of isoprenoid compounds. Catalyzes the conversion of 4-diphosphocytidyl-2-C-methyl-D-erythritol 2-phosphate (CDP-ME2P) to 2-C-methyl-D-erythritol 2,4-cyclodiphosphate (ME-CPP) with a corresponding release of cytidine 5-monophosphate (CMP). In Azoarcus sp. (strain BH72), this protein is 2-C-methyl-D-erythritol 2,4-cyclodiphosphate synthase.